Here is a 244-residue protein sequence, read N- to C-terminus: Protein FAM168A (244 aa).

An N-acetylmethionine modification is found at M1. The residue at position 102 (R102) is an Asymmetric dimethylarginine. Residues 107–126 form a disordered region; sequence TPYKVPPTQSNTAPPPYSPS.

It belongs to the FAM168 family. As to quaternary structure, interacts with POLB. Interacts with AKT1 and MT1X. May interact with FAM168B.

Its function is as follows. In cancer context, protects cells from induced-DNA damage and apoptosis. Acts, at least in part, through PI3K/AKT/NFKB signaling pathway and by preventing POLB degradation. Decreases POLB ubiquitation and stabilizes its protein levels. This Mus musculus (Mouse) protein is Protein FAM168A (Fam168a).